The following is a 442-amino-acid chain: Prenyltransferase nscD (442 aa).

This sequence belongs to the tryptophan dimethylallyltransferase family.

It functions in the pathway secondary metabolite biosynthesis. In terms of biological role, prenyltransferase; part of the gene cluster that mediates the biosynthesis of neosartoricin B, a prenylated anthracenone that probably exhibits T-cell antiproliferative activity, suggestive of a physiological role as an immunosuppressive agent. The non-reducing polyketide synthase nscA probably synthesizes and cyclizes the decaketide backbone. The hydrolase nscB then mediates the product release through hydrolysis followed by spontaneous decarboxylation. The prenyltransferase nscD catalyzes the addition of the dimethylallyl group to the aromatic C5. The FAD-dependent monooxygenase nscC is then responsible for the stereospecific hydroxylation at C2. Neosartoricin B can be converted into two additional compounds neosartoricins C and D. Neosartoricin C is a spirocyclic compound that is cyclized through the attack of C3 hydroxyl on C14, followed by dehydration. On the other hand, neosartoricin D is a further cyclized compound in which attack of C2 on C14 in neosartoricin C results in the formation of the acetal-containing dioxabicyclo-octanone ring. Both of these compounds are novel and possibly represent related metabolites of the gene cluster. This Trichophyton verrucosum (strain HKI 0517) protein is Prenyltransferase nscD.